The primary structure comprises 169 residues: uncharacterized protein (169 aa).

The region spanning 32–162 (CNFRVVNSFV…EPAKSDLIKL (131 aa)) is the Nudix hydrolase domain. The Nudix box signature appears at 69–91 (GGHVESGETYEDALQRELEEELN). The Mg(2+) site is built by Glu85 and Glu89.

This sequence belongs to the Nudix hydrolase family. Requires Mg(2+) as cofactor.

This is an uncharacterized protein from Nostoc sp. (strain PCC 7120 / SAG 25.82 / UTEX 2576).